The chain runs to 749 residues: 5-methyltetrahydropteroyltriglutamate--homocysteine methyltransferase (749 aa).

5-methyltetrahydropteroyltri-L-glutamate is bound by residues Arg15 to Lys18 and Lys114. Residues Ile425–Ser427 and Glu478 each bind L-homocysteine. L-methionine is bound by residues Ile425–Ser427 and Glu478. Trp555 is a 5-methyltetrahydropteroyltri-L-glutamate binding site. Residue Asp593 coordinates L-homocysteine. Position 593 (Asp593) interacts with L-methionine. Glu599 is a 5-methyltetrahydropteroyltri-L-glutamate binding site. Zn(2+) contacts are provided by His636, Cys638, and Glu660. The active-site Proton donor is His689. Position 721 (Cys721) interacts with Zn(2+).

This sequence belongs to the vitamin-B12 independent methionine synthase family. Requires Zn(2+) as cofactor.

It catalyses the reaction 5-methyltetrahydropteroyltri-L-glutamate + L-homocysteine = tetrahydropteroyltri-L-glutamate + L-methionine. It participates in amino-acid biosynthesis; L-methionine biosynthesis via de novo pathway; L-methionine from L-homocysteine (MetE route): step 1/1. Catalyzes the transfer of a methyl group from 5-methyltetrahydrofolate to homocysteine resulting in methionine formation. This chain is 5-methyltetrahydropteroyltriglutamate--homocysteine methyltransferase, found in Streptococcus pneumoniae serotype 2 (strain D39 / NCTC 7466).